A 471-amino-acid polypeptide reads, in one-letter code: Venom prothrombin activator vestarin-D2 (471 aa).

A signal peptide spans 1–20; it reads MAPQLLLCLILTFLWSLPEA. The propeptide occupies 21–40; it reads ESNVFLKSNVANRFLQRTKR. Residues 41–86 form the Gla domain; that stretch reads ANSIFEEIRPGNIERECVEEKCSKEEAREVFQDNEKTEAFWTVYVD. E46, E47, E54, E56, E59, E60, E65, E66, E69, and E75 each carry 4-carboxyglutamate. A disulfide bridge connects residues C57 and C62. The EGF-like 1; calcium-binding domain maps to 86–122; it reads DGDQCLSNPCHYRGTCKDGIGSYTCTCLPGYEGKNCE. Intrachain disulfides connect C90/C101, C95/C110, C112/C121, C129/C140, C136/C149, C151/C164, C172/C333, C233/C238, C381/C395, and C406/C434. O-linked (Hex...) serine glycosylation is present at S92. The EGF-like 2 domain maps to 129 to 164; sequence CRLFNGNCWHFCKTVQNDTQCSCAEGYRLGVDGFSC. Residues 182-226 constitute a propeptide, activation peptide; it reads REASLPDFHFSDDYDAIDENNLVETVQSQSATLLKKSDNPSPDIR. Residues 227–458 enclose the Peptidase S1 domain; that stretch reads IVSGLDCKLG…FIPWIKTIMR (232 aa). H268 acts as the Charge relay system in catalysis. The N-linked (GlcNAc...) asparagine glycan is linked to N271. The active-site Charge relay system is the D313. S410 acts as the Charge relay system in catalysis.

This sequence belongs to the peptidase S1 family. Snake venom subfamily. Heterodimer of a light chain and a heavy chain; disulfide-linked. In terms of processing, the vitamin K-dependent, enzymatic carboxylation of some glutamate residues allows the modified protein to bind calcium. As to expression, expressed by the venom gland.

The protein resides in the secreted. The enzyme catalyses Selective cleavage of Arg-|-Thr and then Arg-|-Ile bonds in prothrombin to form thrombin.. Snake prothrombin activator that attacks the hemostatic system of prey. This protein is functionally similar to blood coagulation factor Xa. This Demansia vestigiata (Lesser black whip snake) protein is Venom prothrombin activator vestarin-D2.